The following is a 273-amino-acid chain: Dermonecrotic toxin SdSicTox-betaIIB1bxi (273 aa).

His4 is an active-site residue. Residues Glu24 and Asp26 each coordinate Mg(2+). His40 (nucleophile) is an active-site residue. Cystine bridges form between Cys44–Cys50 and Cys46–Cys189. Residue Asp84 coordinates Mg(2+).

Belongs to the arthropod phospholipase D family. Class II subfamily. It depends on Mg(2+) as a cofactor. In terms of tissue distribution, expressed by the venom gland.

The protein localises to the secreted. It carries out the reaction an N-(acyl)-sphingosylphosphocholine = an N-(acyl)-sphingosyl-1,3-cyclic phosphate + choline. The enzyme catalyses an N-(acyl)-sphingosylphosphoethanolamine = an N-(acyl)-sphingosyl-1,3-cyclic phosphate + ethanolamine. It catalyses the reaction a 1-acyl-sn-glycero-3-phosphocholine = a 1-acyl-sn-glycero-2,3-cyclic phosphate + choline. The catalysed reaction is a 1-acyl-sn-glycero-3-phosphoethanolamine = a 1-acyl-sn-glycero-2,3-cyclic phosphate + ethanolamine. In terms of biological role, dermonecrotic toxins cleave the phosphodiester linkage between the phosphate and headgroup of certain phospholipids (sphingolipid and lysolipid substrates), forming an alcohol (often choline) and a cyclic phosphate. This toxin acts on sphingomyelin (SM). It may also act on ceramide phosphoethanolamine (CPE), lysophosphatidylcholine (LPC) and lysophosphatidylethanolamine (LPE), but not on lysophosphatidylserine (LPS), and lysophosphatidylglycerol (LPG). It acts by transphosphatidylation, releasing exclusively cyclic phosphate products as second products. Induces dermonecrosis, hemolysis, increased vascular permeability, edema, inflammatory response, and platelet aggregation. In Sicarius cf. damarensis (strain GJB-2008) (Six-eyed sand spider), this protein is Dermonecrotic toxin SdSicTox-betaIIB1bxi.